We begin with the raw amino-acid sequence, 566 residues long: E3 ubiquitin-protein ligase RNF220 (566 aa).

Residue Lys-277 forms a Glycyl lysine isopeptide (Lys-Gly) (interchain with G-Cter in SUMO2) linkage. Residues 277–297 (KREGESPTASPHSSATDDLHH) are disordered. Residue Ser-390 is modified to Phosphoserine. The stretch at 485–513 (EDSAVTTFEALKARVRELERQLSRGDRYK) forms a coiled coil. The tract at residues 514 to 522 (CLICMDSYS) is required for targeting to the cytoplasm. The RING-type zinc-finger motif lies at 514–553 (CLICMDSYSMPLTSIQCWHVHCEECWLRTLGAKKLCPQCN).

In terms of assembly, interacts with SIN3B. Interacts with CTNNB1 (via Armadillo repeats 2-8). Interacts with USP7 (via MATH domain). Auto-ubiquitinated; leads to proteasomal degradation.

It localises to the cytoplasm. It is found in the nucleus. It carries out the reaction S-ubiquitinyl-[E2 ubiquitin-conjugating enzyme]-L-cysteine + [acceptor protein]-L-lysine = [E2 ubiquitin-conjugating enzyme]-L-cysteine + N(6)-ubiquitinyl-[acceptor protein]-L-lysine.. Its pathway is protein modification; protein ubiquitination. Its function is as follows. E3 ubiquitin-protein ligase that promotes the ubiquitination and proteasomal degradation of SIN3B. Independently of its E3 ligase activity, acts as a CTNNB1 stabilizer through USP7-mediated deubiquitination of CTNNB1 and promotes Wnt signaling. Plays a critical role in the regulation of nuclear lamina. This chain is E3 ubiquitin-protein ligase RNF220 (RNF220), found in Macaca fascicularis (Crab-eating macaque).